The chain runs to 251 residues: Cell division protein ZapD (251 aa).

Belongs to the ZapD family. In terms of assembly, interacts with FtsZ.

The protein localises to the cytoplasm. Functionally, cell division factor that enhances FtsZ-ring assembly. Directly interacts with FtsZ and promotes bundling of FtsZ protofilaments, with a reduction in FtsZ GTPase activity. This chain is Cell division protein ZapD, found in Nitrosomonas eutropha (strain DSM 101675 / C91 / Nm57).